Consider the following 152-residue polypeptide: Ferredoxin-thioredoxin reductase catalytic chain, chloroplastic (152 aa).

Residues 1 to 38 constitute a chloroplast transit peptide; it reads MTSTVTTTVGCGGLPVRPLSTATRGRPRRCAVRAQAAG. Position 91 (Cys91) interacts with [4Fe-4S] cluster. Cys93 (nucleophile) is an active-site residue. The cysteines at positions 93 and 123 are disulfide-linked. Residues Cys110, Cys112, and Cys121 each contribute to the [4Fe-4S] cluster site.

It belongs to the ferredoxin thioredoxin reductase beta subunit family. As to quaternary structure, heterodimer of subunit A (variable subunit) and subunit B (catalytic subunit). Heterodimeric FTR forms a complex with ferredoxin and thioredoxin. [4Fe-4S] cluster is required as a cofactor.

It localises to the plastid. Its subcellular location is the chloroplast. It carries out the reaction [thioredoxin]-disulfide + 2 reduced [2Fe-2S]-[ferredoxin] + 2 H(+) = [thioredoxin]-dithiol + 2 oxidized [2Fe-2S]-[ferredoxin]. Its function is as follows. Catalytic subunit of the ferredoxin-thioredoxin reductase (FTR), which catalyzes the two-electron reduction of thioredoxins by the electrons provided by reduced ferredoxin. This Zea mays (Maize) protein is Ferredoxin-thioredoxin reductase catalytic chain, chloroplastic (FTRC).